We begin with the raw amino-acid sequence, 346 residues long: C5a anaphylatoxin chemotactic receptor 1 (346 aa).

Residues 1 to 33 (MDDNNSDWTSYDFGNDTIPSPNEISLSHIGTRH) are Extracellular-facing. N-linked (GlcNAc...) asparagine glycosylation is found at Asn-4 and Asn-15. A helical transmembrane segment spans residues 34 to 60 (WITLVCYGIVFLLGVPGNALVVWVTGF). Topologically, residues 61–65 (RMPNS) are cytoplasmic. A helical transmembrane segment spans residues 66 to 89 (VNAQWFLNLAIADLLCCLSLPILM). Over 90–106 (VPLAQDQHWPFGALACK) the chain is Extracellular. An intrachain disulfide couples Cys-105 to Cys-183. Residues 107-128 (LFSGIFYMMMYCSVLLLVVISL) traverse the membrane as a helical segment. At 129-149 (DRFLLVTKPVWCQNNRQPRQA) the chain is on the cytoplasmic side. The helical transmembrane segment at 150-170 (RILCFIIWILGLLGSSPYFAH) threads the bilayer. Topologically, residues 171–194 (MEIQHHSETKTVCTGSYSSLGHAW) are extracellular. A helical transmembrane segment spans residues 195-220 (AITIIRSFLFFLLPFLIICISHWKVY). The Cytoplasmic segment spans residues 221-238 (HMTSSGRRQRDKSSRTLR). A helical transmembrane segment spans residues 239-261 (VILALVLGFFLCWTPLHIVDLLI). The Extracellular portion of the chain corresponds to 262-279 (LVSDQPSERFEVNLNLAH). The chain crosses the membrane as a helical span at residues 280-300 (VLTLCLAYINSCLNPLLYVCL). Over 301-346 (GRGFKENLISSLRSVLHFASEAPTHGPSMTTNSKSTTDGVFREKPV) the chain is Cytoplasmic. The tract at residues 323-346 (PTHGPSMTTNSKSTTDGVFREKPV) is disordered. Polar residues predominate over residues 327 to 338 (PSMTTNSKSTTD).

This sequence belongs to the G-protein coupled receptor 1 family.

The protein resides in the cell membrane. Functionally, receptor for the chemotactic and inflammatory peptide anaphylatoxin C5a. This receptor stimulates chemotaxis, granule enzyme release and superoxide anion production. In Danio rerio (Zebrafish), this protein is C5a anaphylatoxin chemotactic receptor 1 (c5ar1).